The primary structure comprises 186 residues: Elongation factor P (186 aa).

Belongs to the elongation factor P family.

It localises to the cytoplasm. It participates in protein biosynthesis; polypeptide chain elongation. In terms of biological role, involved in peptide bond synthesis. Stimulates efficient translation and peptide-bond synthesis on native or reconstituted 70S ribosomes in vitro. Probably functions indirectly by altering the affinity of the ribosome for aminoacyl-tRNA, thus increasing their reactivity as acceptors for peptidyl transferase. This is Elongation factor P from Neisseria gonorrhoeae (strain NCCP11945).